The chain runs to 447 residues: C4-dicarboxylate transport protein (447 aa).

Transmembrane regions (helical) follow at residues 21-41 (HLYVQVLIAMALSILLGYFAP), 57-77 (LVKMIIAPVIFLTVVTGIAGM), 92-112 (IYFLCFSTLALVVGLVVVNIV), 141-161 (SLIGFLLNIIPATPVSALASG), 163-183 (ILQVLFFSVLFGIALASVGEA), 201-221 (LVAILMRAAPLGAFGAMAYTV), 232-252 (LAMLVGTFYITAILFVLIVLG), 320-340 (IYMTIAALFIAQALNIPLSWG), 345-365 (LLAVAMLSSKGAAGVTGAGFV), and 368-388 (AATLSVIPSIPVAGIGLIFGV).

The protein belongs to the dicarboxylate/amino acid:cation symporter (DAACS) (TC 2.A.23) family.

The protein localises to the cell inner membrane. Responsible for the transport of dicarboxylates such as succinate, fumarate, and malate from the periplasm across the membrane. The protein is C4-dicarboxylate transport protein of Granulibacter bethesdensis (strain ATCC BAA-1260 / CGDNIH1).